The sequence spans 89 residues: UPF0367 protein P9515_01381 (89 aa).

It belongs to the UPF0367 family.

This is UPF0367 protein P9515_01381 from Prochlorococcus marinus (strain MIT 9515).